The following is a 128-amino-acid chain: Small ribosomal subunit protein uS13 (128 aa).

The segment covering 95–118 (GLPVRGQRTHTNARTRKGPKKGLV) has biased composition (basic residues). Residues 95 to 128 (GLPVRGQRTHTNARTRKGPKKGLVRKAAAPAPKA) form a disordered region.

It belongs to the universal ribosomal protein uS13 family. In terms of assembly, part of the 30S ribosomal subunit. Forms a loose heterodimer with protein S19. Forms two bridges to the 50S subunit in the 70S ribosome.

Functionally, located at the top of the head of the 30S subunit, it contacts several helices of the 16S rRNA. In the 70S ribosome it contacts the 23S rRNA (bridge B1a) and protein L5 of the 50S subunit (bridge B1b), connecting the 2 subunits; these bridges are implicated in subunit movement. Contacts the tRNAs in the A and P-sites. This chain is Small ribosomal subunit protein uS13, found in Anaeromyxobacter sp. (strain K).